We begin with the raw amino-acid sequence, 4004 residues long: Hybrid PKS-NRPS synthetase mpsA (4004 aa).

The Ketosynthase family 3 (KS3) domain maps to 5–438 (NEPIAVIGSA…GANAHAILES (434 aa)). Catalysis depends on for beta-ketoacyl synthase activity residues Cys178, His317, and His358. In terms of domain architecture, Malonyl-CoA:ACP transacylase (MAT) spans 544-867 (VFTGQGAQWP…RGGDDVNAFS (324 aa)). An N-terminal hotdog fold region spans residues 933 to 1066 (HPILGVKSIE…GTISITLGIP (134 aa)). The dehydratase (DH) domain stretch occupies residues 933 to 1233 (HPILGVKSIE…SMVPFSNATA (301 aa)). Residues 933-1234 (HPILGVKSIE…MVPFSNATAE (302 aa)) enclose the PKS/mFAS DH domain. His966 acts as the Proton acceptor; for dehydratase activity in catalysis. The tract at residues 1081-1234 (MVDVEVDRFY…MVPFSNATAE (154 aa)) is C-terminal hotdog fold. Residue Asp1141 is the Proton donor; for dehydratase activity of the active site. Residues 1289–1575 (EEEEQTLIHY…DTYAPNFDSL (287 aa)) form a methyltransferase (MT) domain region. Positions 2102-2272 (TYFMVGLSGE…RRGLAASILG (171 aa)) constitute a Ketoreductase (KR) domain. In terms of domain architecture, Carrier 1 spans 2384 to 2462 (EVVEIMQAGF…DLLNDALDRL (79 aa)). Ser2422 carries the post-translational modification O-(pantetheine 4'-phosphoryl)serine. Residues 2471–2540 (GADPSSVSRP…ERRAAELARK (70 aa)) are disordered. Residues 2488 to 2500 (PSVSRPASNAPPV) show a composition bias toward low complexity. Positions 2514–2540 (LKAEREREAEAKRKREEERRAAELARK) are enriched in basic and acidic residues. The condensation (C) domain stretch occupies residues 2584–3019 (PMSFGQSRFW…RQCAERPGRE (436 aa)). The segment at 3060 to 3459 (KRHTASLAIK…GRIEGDTQIK (400 aa)) is adenylation (A) (KR) domain. In terms of domain architecture, Carrier 2 spans 3570–3647 (ANLTPTESRL…GMARAIDDAT (78 aa)). Ser3607 is subject to O-(pantetheine 4'-phosphoryl)serine. Residues 3694–3924 (LTIVLTGATG…VVEGVAQALF (231 aa)) are reductase (RED) domain.

It in the C-terminal section; belongs to the NRP synthetase family. Pantetheine 4'-phosphate is required as a cofactor.

Its pathway is secondary metabolite biosynthesis. Functionally, hybrid PKS-NRPS synthetase; part of the gene cluster that mediates the biosynthesis of macrophasetins, 3-decalinoyltetramic acids (DTAs) which feature a tetramate (pyrrolidine-2,4-dione) unit connected to a decalin fragment and that have potent bioactivities. The PKS-NRPS mpsA together with its associated enoylreductase partner mpsG incorporate one unit of acetyl-CoA, seven units of malonyl-CoA, and one unit of L-alanine to assemble the linear tetramic acid intermediate corresponding to the backbone of macrophasetins. Without the Diels-Alderase mpsD, the mpsA/G product can undergo the non-enzymatic intramolecular Diels-Alder (IMDA) reaction to generate both macrophasetin A and macrophasetin B. Catalyzed by mpsD, the linear tetramic acid intermediate is thoroughly converted to macrophasetin A via the endo-IMDA reaction in a regioselective and stereoselective manner. Finally, the cytochrome P450 monooxygenase mpsF catalyzes the hydroxylation at C20 to yield the end product macrophasetin C. This Macrophomina phaseolina (strain MS6) (Charcoal rot fungus) protein is Hybrid PKS-NRPS synthetase mpsA.